A 226-amino-acid chain; its full sequence is 2-C-methyl-D-erythritol 4-phosphate cytidylyltransferase (226 aa).

The protein belongs to the IspD/TarI cytidylyltransferase family. IspD subfamily.

It catalyses the reaction 2-C-methyl-D-erythritol 4-phosphate + CTP + H(+) = 4-CDP-2-C-methyl-D-erythritol + diphosphate. It functions in the pathway isoprenoid biosynthesis; isopentenyl diphosphate biosynthesis via DXP pathway; isopentenyl diphosphate from 1-deoxy-D-xylulose 5-phosphate: step 2/6. In terms of biological role, catalyzes the formation of 4-diphosphocytidyl-2-C-methyl-D-erythritol from CTP and 2-C-methyl-D-erythritol 4-phosphate (MEP). This is 2-C-methyl-D-erythritol 4-phosphate cytidylyltransferase from Thermosipho africanus (strain TCF52B).